Reading from the N-terminus, the 149-residue chain is Pleckstrin homology domain-containing family J member 1 (149 aa).

One can recognise a PH domain in the interval 15–108 (RAEKAAELGM…WVEALTNASY (94 aa)).

This is Pleckstrin homology domain-containing family J member 1 (plekhj1) from Xenopus laevis (African clawed frog).